We begin with the raw amino-acid sequence, 672 residues long: UvrABC system protein B (672 aa).

The Helicase ATP-binding domain occupies 26–183 (EGLEDGLAHQ…RRLSELQYVR (158 aa)). 39–46 (GVTGSGKT) lines the ATP pocket. The Beta-hairpin signature appears at 92 to 115 (YYDYYQPEAYVPSSDTFIEKDASV). A Helicase C-terminal domain is found at 431 to 597 (QVDDLLSEIN…ALNKKVTDIL (167 aa)). The tract at residues 601-623 (DGPVRSRTKGARGQRAAEPHPDY) is disordered. A UVR domain is found at 632 to 667 (EQQIQRLETQMYQHAQNLEFEQAAALRDEIHILREQ).

It belongs to the UvrB family. In terms of assembly, forms a heterotetramer with UvrA during the search for lesions. Interacts with UvrC in an incision complex.

Its subcellular location is the cytoplasm. Its function is as follows. The UvrABC repair system catalyzes the recognition and processing of DNA lesions. A damage recognition complex composed of 2 UvrA and 2 UvrB subunits scans DNA for abnormalities. Upon binding of the UvrA(2)B(2) complex to a putative damaged site, the DNA wraps around one UvrB monomer. DNA wrap is dependent on ATP binding by UvrB and probably causes local melting of the DNA helix, facilitating insertion of UvrB beta-hairpin between the DNA strands. Then UvrB probes one DNA strand for the presence of a lesion. If a lesion is found the UvrA subunits dissociate and the UvrB-DNA preincision complex is formed. This complex is subsequently bound by UvrC and the second UvrB is released. If no lesion is found, the DNA wraps around the other UvrB subunit that will check the other stand for damage. The protein is UvrABC system protein B of Edwardsiella ictaluri (strain 93-146).